Reading from the N-terminus, the 372-residue chain is N-methyl-L-tryptophan oxidase (372 aa).

4-34 (DLIIIGSGSVGAAAGYYATRAGLKVLMTDAH) lines the FAD pocket. Cysteine 307 carries the post-translational modification S-8alpha-FAD cysteine.

It belongs to the MSOX/MTOX family. MTOX subfamily. In terms of assembly, monomer. It depends on FAD as a cofactor.

It carries out the reaction N(alpha)-methyl-L-tryptophan + O2 + H2O = L-tryptophan + formaldehyde + H2O2. Its function is as follows. Catalyzes the oxidative demethylation of N-methyl-L-tryptophan. This Salmonella typhi protein is N-methyl-L-tryptophan oxidase.